The primary structure comprises 398 residues: Riboflavin transporter RfnT (398 aa).

The next 12 helical transmembrane spans lie at 13–35 (ILTI…GGLV), 45–67 (LVTL…AAFF), 74–91 (RNAY…GVIA), 95–117 (IFAA…ASYV), 137–156 (ISWV…QLVI), 166–188 (MFAG…LFML), 220–242 (VAAG…IAMV), 252–274 (ALGI…KLIT), 281–300 (ITAL…LGGF), 305–324 (FWGA…IGAT), 345–367 (FIMF…SSGW), and 372–389 (WLVF…ILRL).

Belongs to the major facilitator superfamily.

The protein resides in the cell membrane. Transports riboflavin into the cell. The chain is Riboflavin transporter RfnT from Brucella anthropi (strain ATCC 49188 / DSM 6882 / CCUG 24695 / JCM 21032 / LMG 3331 / NBRC 15819 / NCTC 12168 / Alc 37) (Ochrobactrum anthropi).